A 604-amino-acid polypeptide reads, in one-letter code: Elongation factor 4 (604 aa).

Residues 7 to 189 (SRLRNFCIIA…AVVDRIPPPA (183 aa)) form the tr-type G domain. GTP contacts are provided by residues 19–24 (DHGKST) and 136–139 (NKID).

The protein belongs to the TRAFAC class translation factor GTPase superfamily. Classic translation factor GTPase family. LepA subfamily.

It localises to the cell inner membrane. The catalysed reaction is GTP + H2O = GDP + phosphate + H(+). Functionally, required for accurate and efficient protein synthesis under certain stress conditions. May act as a fidelity factor of the translation reaction, by catalyzing a one-codon backward translocation of tRNAs on improperly translocated ribosomes. Back-translocation proceeds from a post-translocation (POST) complex to a pre-translocation (PRE) complex, thus giving elongation factor G a second chance to translocate the tRNAs correctly. Binds to ribosomes in a GTP-dependent manner. In Prochlorococcus marinus (strain MIT 9313), this protein is Elongation factor 4.